The chain runs to 187 residues: ATP synthase subunit b, chloroplastic (187 aa).

A helical membrane pass occupies residues 29–49 (LAVVLGVLIYLGKGVCAGCIL).

The protein belongs to the ATPase B chain family. F-type ATPases have 2 components, F(1) - the catalytic core - and F(0) - the membrane proton channel. F(1) has five subunits: alpha(3), beta(3), gamma(1), delta(1), epsilon(1). F(0) has four main subunits: a(1), b(1), b'(1) and c(10-14). The alpha and beta chains form an alternating ring which encloses part of the gamma chain. F(1) is attached to F(0) by a central stalk formed by the gamma and epsilon chains, while a peripheral stalk is formed by the delta, b and b' chains.

The protein resides in the plastid. The protein localises to the chloroplast thylakoid membrane. F(1)F(0) ATP synthase produces ATP from ADP in the presence of a proton or sodium gradient. F-type ATPases consist of two structural domains, F(1) containing the extramembraneous catalytic core and F(0) containing the membrane proton channel, linked together by a central stalk and a peripheral stalk. During catalysis, ATP synthesis in the catalytic domain of F(1) is coupled via a rotary mechanism of the central stalk subunits to proton translocation. Its function is as follows. Component of the F(0) channel, it forms part of the peripheral stalk, linking F(1) to F(0). This Angiopteris evecta (Mule's foot fern) protein is ATP synthase subunit b, chloroplastic.